Consider the following 507-residue polypeptide: Heat shock 70 kDa protein 14-B (507 aa).

This sequence belongs to the heat shock protein 70 family. As to quaternary structure, component of ribosome-associated complex (RAC).

Its subcellular location is the cytoplasm. The protein localises to the cytosol. Component of the ribosome-associated complex (RAC), a complex involved in folding or maintaining nascent polypeptides in a folding-competent state. In Xenopus laevis (African clawed frog), this protein is Heat shock 70 kDa protein 14-B (hspa14-b).